Consider the following 273-residue polypeptide: Glutamate racemase (273 aa).

Substrate is bound by residues 7-8 (DS) and 39-40 (YG). The active-site Proton donor/acceptor is the Cys-70. Substrate is bound at residue 71–72 (NT). Catalysis depends on Cys-194, which acts as the Proton donor/acceptor. Position 195–196 (195–196 (TH)) interacts with substrate.

Belongs to the aspartate/glutamate racemases family.

It catalyses the reaction L-glutamate = D-glutamate. The protein operates within cell wall biogenesis; peptidoglycan biosynthesis. Its function is as follows. Provides the (R)-glutamate required for cell wall biosynthesis. This chain is Glutamate racemase, found in Dinoroseobacter shibae (strain DSM 16493 / NCIMB 14021 / DFL 12).